A 109-amino-acid chain; its full sequence is Transmembrane protein 233 (109 aa).

The disordered stretch occupies residues 1–30 (MSQYAPSPDFKRALDSSPEANTEDDKTEED). The Cytoplasmic segment spans residues 1 to 41 (MSQYAPSPDFKRALDSSPEANTEDDKTEEDVPMPKNYLWLT). The segment covering 21-30 (NTEDDKTEED) has biased composition (acidic residues). Positions 42 to 62 (IVSCFCPAYPINIVALVFSIM) form an intramembrane region, helical. Residues 63–84 (SLNSYNDGDYEGARRLGRNAKW) lie on the Cytoplasmic side of the membrane. The helical transmembrane segment at 85 to 105 (VAIASIIIGLLIIGISCAVHF) threads the bilayer. Topologically, residues 106–109 (TRNA) are extracellular.

It belongs to the CD225/Dispanin family. As to quaternary structure, interacts with the giant stinging tree toxin ExTxA (AC P0DQP3). Interacts with Nav1.7/SCN9A. Interacts with Nav1.1/SCN1A, Nav1.2/SCN2A, Nav1.3/SCN3A, Nav1.4/SCN4A, Nav1.5/SCN5A, and Nav1.6/SCN8A.

The protein resides in the cell membrane. In terms of biological role, probable accessory protein of voltage-gated sodium channels. The sequence is that of Transmembrane protein 233 from Homo sapiens (Human).